Here is a 59-residue protein sequence, read N- to C-terminus: Large ribosomal subunit protein bL32 (59 aa).

The segment at 1–59 (MAVQQNKKSPSKRGMHRSHDALTAPALSVDSTTGEVHRPHHISPNGMYRGRKVVKAKGE) is disordered. Basic residues predominate over residues 49–59 (RGRKVVKAKGE).

It belongs to the bacterial ribosomal protein bL32 family.

The protein is Large ribosomal subunit protein bL32 (rpmF) of Neisseria meningitidis serogroup B (strain ATCC BAA-335 / MC58).